We begin with the raw amino-acid sequence, 119 residues long: Ribonuclease P protein component (119 aa).

The protein belongs to the RnpA family. Consists of a catalytic RNA component (M1 or rnpB) and a protein subunit.

The catalysed reaction is Endonucleolytic cleavage of RNA, removing 5'-extranucleotides from tRNA precursor.. Its function is as follows. RNaseP catalyzes the removal of the 5'-leader sequence from pre-tRNA to produce the mature 5'-terminus. It can also cleave other RNA substrates such as 4.5S RNA. The protein component plays an auxiliary but essential role in vivo by binding to the 5'-leader sequence and broadening the substrate specificity of the ribozyme. The protein is Ribonuclease P protein component of Streptococcus pyogenes serotype M12 (strain MGAS2096).